The chain runs to 111 residues: Cytochrome c 2.1 (111 aa).

Position 2 is an N-acetylserine (Ser2). Heme c is bound by residues Cys20, Cys23, His24, and Met85.

Belongs to the cytochrome c family. Binds 1 heme c group covalently per subunit.

It localises to the mitochondrion intermembrane space. Electron carrier protein. The oxidized form of the cytochrome c heme group can accept an electron from the heme group of the cytochrome c1 subunit of cytochrome reductase. Cytochrome c then transfers this electron to the cytochrome oxidase complex, the final protein carrier in the mitochondrial electron-transport chain. The sequence is that of Cytochrome c 2.1 (cyc-2.1) from Caenorhabditis elegans.